Here is a 398-residue protein sequence, read N- to C-terminus: Enoyl-[acyl-carrier-protein] reductase [NADH] (398 aa).

Residues 48-53 (GASTGY), 74-75 (FE), 111-112 (DA), and 139-140 (LA) contribute to the NAD(+) site. Position 225 (tyrosine 225) interacts with substrate. The active-site Proton donor is tyrosine 235. NAD(+)-binding positions include lysine 244 and 273–275 (VVT).

It belongs to the TER reductase family. In terms of assembly, monomer.

The enzyme catalyses a 2,3-saturated acyl-[ACP] + NAD(+) = a (2E)-enoyl-[ACP] + NADH + H(+). It functions in the pathway lipid metabolism; fatty acid biosynthesis. Its function is as follows. Involved in the final reduction of the elongation cycle of fatty acid synthesis (FAS II). Catalyzes the reduction of a carbon-carbon double bond in an enoyl moiety that is covalently linked to an acyl carrier protein (ACP). The chain is Enoyl-[acyl-carrier-protein] reductase [NADH] from Pseudomonas fluorescens (strain ATCC BAA-477 / NRRL B-23932 / Pf-5).